The primary structure comprises 902 residues: Aconitate hydratase A (902 aa).

[4Fe-4S] cluster-binding residues include C441, C507, and C510.

The protein belongs to the aconitase/IPM isomerase family. Monomer. [4Fe-4S] cluster serves as cofactor.

It catalyses the reaction citrate = D-threo-isocitrate. It carries out the reaction (2S,3R)-3-hydroxybutane-1,2,3-tricarboxylate = 2-methyl-cis-aconitate + H2O. It participates in carbohydrate metabolism; tricarboxylic acid cycle; isocitrate from oxaloacetate: step 2/2. It functions in the pathway organic acid metabolism; propanoate degradation. Functionally, involved in the catabolism of short chain fatty acids (SCFA) via the tricarboxylic acid (TCA)(acetyl degradation route) and probably the 2-methylcitrate cycle I (propionate degradation route). Catalyzes the reversible isomerization of citrate to isocitrate via cis-aconitate. Also able to catalyze the hydration of cis-homoaconitate to yield (R)-homocitrate, but with a lower efficiency. Could catalyze the hydration of 2-methyl-cis-aconitate to yield (2R,3S)-2-methylisocitrate. The apo form of AcnA functions as a RNA-binding regulatory protein. The polypeptide is Aconitate hydratase A (acoA) (Thermus thermophilus (strain ATCC 27634 / DSM 579 / HB8)).